A 427-amino-acid polypeptide reads, in one-letter code: BRO1 domain-containing protein BROX homolog (427 aa).

The BRO1 domain maps to 1 to 427 (MSHWFHRNPI…PSNSSGCVIA (427 aa)).

This sequence belongs to the BROX family.

The polypeptide is BRO1 domain-containing protein BROX homolog (Caenorhabditis elegans).